The chain runs to 434 residues: Protein ENHANCED PSEUDOMONAS SUSCEPTIBILITY 1 (434 aa).

Aspartate 376 functions as the Proton acceptor in the catalytic mechanism.

The protein belongs to the plant acyltransferase family.

Its function is as follows. Required for pathogen-induced salicylic acid (SA) accumulation and SA-mediated resistance to virulent and avirulent pathogens (e.g. P.syringae). The polypeptide is Protein ENHANCED PSEUDOMONAS SUSCEPTIBILITY 1 (Arabidopsis thaliana (Mouse-ear cress)).